A 336-amino-acid chain; its full sequence is Alcohol dehydrogenase, propanol-preferring (336 aa).

Cys-37, His-58, Cys-89, Cys-92, Cys-95, Cys-103, and Cys-145 together coordinate Zn(2+).

The protein belongs to the zinc-containing alcohol dehydrogenase family. It depends on Zn(2+) as a cofactor.

The enzyme catalyses a primary alcohol + NAD(+) = an aldehyde + NADH + H(+). It catalyses the reaction a secondary alcohol + NAD(+) = a ketone + NADH + H(+). Its function is as follows. Preferred specificity is towards 1-propanol. This chain is Alcohol dehydrogenase, propanol-preferring (adhP), found in Escherichia coli (strain K12).